The chain runs to 157 residues: Thioredoxin 2 (157 aa).

The first 23 residues, 1-23, serve as a signal peptide directing secretion; sequence MKKYIFFFLFSFINFFFVYDVTC. In terms of domain architecture, Thioredoxin spans 46 to 157; sequence LRMFKKVPRL…DLIALIKKHL (112 aa). Catalysis depends on nucleophile residues Cys82 and Cys85. A disulfide bond links Cys82 and Cys85.

The protein belongs to the thioredoxin family. In terms of assembly, monomer. Component of the Plasmodium translocon of exported proteins (PTEX) complex composed of HSP101, EXP2, PTEX150, PTEX88 and TRX2. Post-translationally, the disulfide bond between Cys-82 and Cys-85 acts as a redox-active center and is reduced by thioredoxin reductase TRXR.

The protein localises to the parasitophorous vacuole membrane. Participates in various redox reactions through the reversible oxidation of its active center dithiol to a disulfide and catalyzes dithiol-disulfide exchange reactions. As part of the translocon PTEX complex, plays a role in the export of parasite proteins into the host erythrocyte. The translocon PTEX complex is a multi-protein machinery resident in the parasite parasitophorous vacuolar membrane, responsible for protein secretion into host cells. May contribute to the unfolding of proteins containing the PEXEL localization motif before their passage through the translocon or regulate the PTEX complex function. The chain is Thioredoxin 2 from Plasmodium falciparum (isolate 3D7).